A 490-amino-acid polypeptide reads, in one-letter code: Serine/threonine-protein kinase PBL35 (490 aa).

2 disordered regions span residues 1–39 and 80–103; these read MGFD…RNSE and SAIV…SNAE. Positions 14–39 form a coiled coil; it reads SKTSNENEKKKKKRRRKKNNNVRNSE. The span at 23 to 33 shows a compositional bias: basic residues; the sequence is KKKKRRRKKNN. The span at 94–103 shows a compositional bias: low complexity; that stretch reads SSTTTTSNAE. A Protein kinase domain is found at 136–422; it reads FRPESLLGEG…VEVLKPLPHL (287 aa). ATP contacts are provided by residues 142–150 and K174; that span reads LGEGGFGCV. At Y219 the chain carries Phosphotyrosine. Catalysis depends on D269, which acts as the Proton acceptor. A phosphoserine mark is found at S273 and S303. A phosphothreonine mark is found at T304 and T309. A Phosphotyrosine modification is found at Y317. The disordered stretch occupies residues 442–490; the sequence is AGSGSGSGRGFGSRNGQPVFRTLSSPHGQAGSSPYRHQIPSPKPKGATT. A compositionally biased stretch (gly residues) spans 444 to 454; that stretch reads SGSGSGRGFGS. A compositionally biased stretch (polar residues) spans 463-473; sequence TLSSPHGQAGS.

Belongs to the protein kinase superfamily. Ser/Thr protein kinase family. Interacts with SD129. In terms of processing, phosphorylated by SD129 in response to the pathogen-associated molecular pattern (PAMP) 3-OH-C10:0, a medium-chain 3-hydroxy fatty acid.

The protein resides in the cell membrane. The enzyme catalyses L-seryl-[protein] + ATP = O-phospho-L-seryl-[protein] + ADP + H(+). The catalysed reaction is L-threonyl-[protein] + ATP = O-phospho-L-threonyl-[protein] + ADP + H(+). Involved in chitin-triggered immune signaling and is required for reactive oxygen species (ROS) production. Acts downstream of SD129 in defense signaling triggered by the pathogen-associated molecular pattern (PAMP) 3-OH-C10:0, a medium-chain 3-hydroxy fatty acid. The polypeptide is Serine/threonine-protein kinase PBL35 (Arabidopsis thaliana (Mouse-ear cress)).